An 88-amino-acid polypeptide reads, in one-letter code: Large ribosomal subunit protein bL27 (88 aa).

The interval 1-25 (MAHKKGASSSRNGRDSNAQRLGVKR) is disordered. A compositionally biased stretch (polar residues) spans 7 to 19 (ASSSRNGRDSNAQ).

This sequence belongs to the bacterial ribosomal protein bL27 family.

The sequence is that of Large ribosomal subunit protein bL27 from Nocardia farcinica (strain IFM 10152).